Here is a 330-residue protein sequence, read N- to C-terminus: Ketol-acid reductoisomerase (NADP(+)) (330 aa).

The 181-residue stretch at 1-181 (MNVYYEQDAD…GGTKAGVIET (181 aa)) folds into the KARI N-terminal Rossmann domain. NADP(+) contacts are provided by residues 24–27 (YGSQ), R47, S50, S52, and 82–85 (DQTQ). H107 is a catalytic residue. G133 contacts NADP(+). The KARI C-terminal knotted domain maps to 182 to 327 (NFKDETETDL…AKLRNMMSWL (146 aa)). Residues D190, E194, E226, and E230 each coordinate Mg(2+). Substrate is bound at residue S251.

It belongs to the ketol-acid reductoisomerase family. Mg(2+) serves as cofactor.

The enzyme catalyses (2R)-2,3-dihydroxy-3-methylbutanoate + NADP(+) = (2S)-2-acetolactate + NADPH + H(+). It carries out the reaction (2R,3R)-2,3-dihydroxy-3-methylpentanoate + NADP(+) = (S)-2-ethyl-2-hydroxy-3-oxobutanoate + NADPH + H(+). It participates in amino-acid biosynthesis; L-isoleucine biosynthesis; L-isoleucine from 2-oxobutanoate: step 2/4. It functions in the pathway amino-acid biosynthesis; L-valine biosynthesis; L-valine from pyruvate: step 2/4. Functionally, involved in the biosynthesis of branched-chain amino acids (BCAA). Catalyzes an alkyl-migration followed by a ketol-acid reduction of (S)-2-acetolactate (S2AL) to yield (R)-2,3-dihydroxy-isovalerate. In the isomerase reaction, S2AL is rearranged via a Mg-dependent methyl migration to produce 3-hydroxy-3-methyl-2-ketobutyrate (HMKB). In the reductase reaction, this 2-ketoacid undergoes a metal-dependent reduction by NADPH to yield (R)-2,3-dihydroxy-isovalerate. This is Ketol-acid reductoisomerase (NADP(+)) from Chlorobium luteolum (strain DSM 273 / BCRC 81028 / 2530) (Pelodictyon luteolum).